We begin with the raw amino-acid sequence, 412 residues long: L-cysteine:1D-myo-inositol 2-amino-2-deoxy-alpha-D-glucopyranoside ligase (412 aa).

Zn(2+) is bound at residue Cys45. L-cysteinyl-5'-AMP-binding positions include 45–48, Thr60, and 83–85; these read CGIT and NIT. The short motif at 47–57 is the 'HIGH' region element; that stretch reads ITPYDAAHLGH. Residues 185–190 carry the 'ERGGDP' region motif; it reads ERGGDP. Residue Trp225 participates in L-cysteinyl-5'-AMP binding. Zn(2+) is bound at residue Cys229. 247–249 is an L-cysteinyl-5'-AMP binding site; it reads GDD. His254 contacts Zn(2+). Val281 contributes to the L-cysteinyl-5'-AMP binding site. The 'KMSKS' region signature appears at 287-291; sequence KMSKS.

The protein belongs to the class-I aminoacyl-tRNA synthetase family. MshC subfamily. As to quaternary structure, monomer. It depends on Zn(2+) as a cofactor.

It catalyses the reaction 1D-myo-inositol 2-amino-2-deoxy-alpha-D-glucopyranoside + L-cysteine + ATP = 1D-myo-inositol 2-(L-cysteinylamino)-2-deoxy-alpha-D-glucopyranoside + AMP + diphosphate + H(+). Functionally, catalyzes the ATP-dependent condensation of GlcN-Ins and L-cysteine to form L-Cys-GlcN-Ins. The protein is L-cysteine:1D-myo-inositol 2-amino-2-deoxy-alpha-D-glucopyranoside ligase of Thermobifida fusca (strain YX).